A 2543-amino-acid polypeptide reads, in one-letter code: Zinc finger FYVE domain-containing protein 26 (2543 aa).

Residue Ser297 is modified to Phosphoserine. 4 disordered regions span residues 523-545 (ECRD…SLSS), 609-636 (GLLG…GCQE), 699-722 (LSSH…SRDG), and 744-820 (VTSN…GRLQ). 3 positions are modified to phosphoserine: Ser615, Ser619, and Ser703. Basic and acidic residues predominate over residues 699–710 (LSSHSPPEKPKL). A compositionally biased stretch (basic residues) spans 767–776 (SLRRGRRTRR). The span at 786 to 806 (SNPSLESTSSELSTSTSEGSL) shows a compositional bias: low complexity. Phosphoserine is present on Ser802. Residues 870–897 (MFMERYQEVIQELSRVEHKIENQNSDGG) are a coiled coil. The interval 1272–1299 (LSTLSSPKPTGNSTLERKPHSSPRDSSL) is disordered. The segment covering 1273 to 1285 (STLSSPKPTGNST) has biased composition (polar residues). Phosphoserine occurs at positions 1744, 1765, 1784, and 1786. The segment at 1780-1812 (STIHSPSPRERSFPESQPPPEFVPPATPPGRPQ) is disordered. The segment covering 1795–1810 (SQPPPEFVPPATPPGR) has biased composition (pro residues). The segment at 1816 to 1876 (DESASICMVC…VCDQCYSYYN (61 aa)) adopts an FYVE-type zinc-finger fold. Zn(2+) is bound by residues Cys1822, Cys1825, Cys1839, Cys1842, Cys1847, Cys1850, Cys1868, and Cys1871.

This sequence belongs to the ZFYVE26 family. As to quaternary structure, interacts with AP5Z1, AP5B1, AP5S1 and SPG11. Interacts with TTC19 and KIF13A.

The protein resides in the cytoplasm. It localises to the cytoskeleton. Its subcellular location is the microtubule organizing center. The protein localises to the centrosome. It is found in the midbody. Phosphatidylinositol 3-phosphate-binding protein required for the abscission step in cytokinesis: recruited to the midbody during cytokinesis and acts as a regulator of abscission. May also be required for efficient homologous recombination DNA double-strand break repair. The polypeptide is Zinc finger FYVE domain-containing protein 26 (ZFYVE26) (Ailuropoda melanoleuca (Giant panda)).